The sequence spans 396 residues: Phosphoglycerate kinase (396 aa).

Substrate-binding positions include 23–25, Arg-38, 61–64, Arg-122, and Arg-155; these read DFN and HMGK. Residues Lys-206, Gly-296, Glu-327, and 353–356 contribute to the ATP site; that span reads GGDS.

It belongs to the phosphoglycerate kinase family. As to quaternary structure, monomer.

It localises to the cytoplasm. It catalyses the reaction (2R)-3-phosphoglycerate + ATP = (2R)-3-phospho-glyceroyl phosphate + ADP. It participates in carbohydrate degradation; glycolysis; pyruvate from D-glyceraldehyde 3-phosphate: step 2/5. In Clostridium botulinum (strain Eklund 17B / Type B), this protein is Phosphoglycerate kinase.